We begin with the raw amino-acid sequence, 308 residues long: tRNA dimethylallyltransferase (308 aa).

Position 10–17 (10–17 (GPTASGKT)) interacts with ATP. Residue 12-17 (TASGKT) coordinates substrate. Interaction with substrate tRNA regions lie at residues 35-38 (DSSL) and 159-163 (QRIFR).

Belongs to the IPP transferase family. As to quaternary structure, monomer. Requires Mg(2+) as cofactor.

It catalyses the reaction adenosine(37) in tRNA + dimethylallyl diphosphate = N(6)-dimethylallyladenosine(37) in tRNA + diphosphate. Its function is as follows. Catalyzes the transfer of a dimethylallyl group onto the adenine at position 37 in tRNAs that read codons beginning with uridine, leading to the formation of N6-(dimethylallyl)adenosine (i(6)A). The polypeptide is tRNA dimethylallyltransferase (Francisella tularensis subsp. tularensis (strain FSC 198)).